Reading from the N-terminus, the 89-residue chain is Small ribosomal subunit protein uS15 (89 aa).

The span at 1 to 18 shows a compositional bias: basic and acidic residues; the sequence is MALSAQEKDAIVKEHQTS. The disordered stretch occupies residues 1 to 25; that stretch reads MALSAQEKDAIVKEHQTSETDTGSP.

The protein belongs to the universal ribosomal protein uS15 family. As to quaternary structure, part of the 30S ribosomal subunit. Forms a bridge to the 50S subunit in the 70S ribosome, contacting the 23S rRNA.

In terms of biological role, one of the primary rRNA binding proteins, it binds directly to 16S rRNA where it helps nucleate assembly of the platform of the 30S subunit by binding and bridging several RNA helices of the 16S rRNA. Functionally, forms an intersubunit bridge (bridge B4) with the 23S rRNA of the 50S subunit in the ribosome. The chain is Small ribosomal subunit protein uS15 from Teredinibacter turnerae (strain ATCC 39867 / T7901).